The sequence spans 449 residues: Na(+)/H(+) antiporter NhaA 2 (449 aa).

11 helical membrane passes run 32–52 (IEAT…TLSN), 87–107 (GLMT…VVLG), 114–134 (MVAL…GLYL), 145–165 (GWGV…ALLG), 174–194 (VFLL…VAVG), 202–222 (TALA…LLGV), 233–253 (AIIW…GVIL), 318–338 (WVAF…PITI), 347–367 (LAVM…FAWL), 382–402 (WGGL…ALFI), and 417–437 (LGIL…LCAL).

This sequence belongs to the NhaA Na(+)/H(+) (TC 2.A.33) antiporter family.

Its subcellular location is the cell inner membrane. The enzyme catalyses Na(+)(in) + 2 H(+)(out) = Na(+)(out) + 2 H(+)(in). In terms of biological role, na(+)/H(+) antiporter that extrudes sodium in exchange for external protons. The protein is Na(+)/H(+) antiporter NhaA 2 of Acidiphilium cryptum (strain JF-5).